We begin with the raw amino-acid sequence, 564 residues long: Kelch repeat and BTB domain-containing protein A55 (564 aa).

In terms of domain architecture, BTB spans 21–88 (CDISIVINDE…IYGIPLSLTN (68 aa)). Kelch repeat units follow at residues 252–297 (IELI…VLDN), 298–346 (IIYM…ADDE), 347–395 (YIYC…MLNG), 397–441 (IYVM…VHDG), 442–492 (KIYI…SAHN), and 494–539 (LYVG…CEPI).

This sequence belongs to the poxviruses A55 protein family. Interacts (via BTB domain) with host CUL3.

The protein localises to the host cytoplasm. Functionally, probable substrate-specific adapter of CUL3-containing E3 ubiquitin-protein ligases which mediate the ubiquitination and subsequent proteasomal degradation of host target proteins. The sequence is that of Kelch repeat and BTB domain-containing protein A55 (KBTB1) from Bos taurus (Bovine).